Here is a 136-residue protein sequence, read N- to C-terminus: Large ribosomal subunit protein bL21 (136 aa).

It belongs to the bacterial ribosomal protein bL21 family. As to quaternary structure, part of the 50S ribosomal subunit. Contacts protein L20.

This protein binds to 23S rRNA in the presence of protein L20. The chain is Large ribosomal subunit protein bL21 from Trichodesmium erythraeum (strain IMS101).